A 154-amino-acid chain; its full sequence is Prefoldin subunit alpha (154 aa).

Belongs to the prefoldin alpha subunit family. As to quaternary structure, heterohexamer of two alpha and four beta subunits.

It localises to the cytoplasm. In terms of biological role, molecular chaperone capable of stabilizing a range of proteins. Seems to fulfill an ATP-independent, HSP70-like function in archaeal de novo protein folding. This chain is Prefoldin subunit alpha, found in Hyperthermus butylicus (strain DSM 5456 / JCM 9403 / PLM1-5).